Reading from the N-terminus, the 345-residue chain is Protein RecA (345 aa).

65–72 (GPESSGKT) is an ATP binding site.

Belongs to the RecA family.

The protein resides in the cytoplasm. In terms of biological role, can catalyze the hydrolysis of ATP in the presence of single-stranded DNA, the ATP-dependent uptake of single-stranded DNA by duplex DNA, and the ATP-dependent hybridization of homologous single-stranded DNAs. It interacts with LexA causing its activation and leading to its autocatalytic cleavage. The protein is Protein RecA of Sulfurimonas denitrificans (strain ATCC 33889 / DSM 1251) (Thiomicrospira denitrificans (strain ATCC 33889 / DSM 1251)).